The sequence spans 47 residues: Capistruin (47 aa).

A propeptide spanning residues 1–28 is cleaved from the precursor; sequence MVRLLAKLLRSTIHGSNGVSLDAVSSTH. Positions 29–37 form a cross-link, isoaspartyl glycine isopeptide (Gly-Asp); that stretch reads GTPGFQTPD.

Post-translationally, it is assumed that the two processing enzymes CapB/CapC convert the precursor protein CapA into the mature lasso peptide capistruin. CapB is assumed to cleave the precursor protein CapA and to set an N-terminal Gly free, whose a-NH2 group acts as the nucleophile in the subsequent cyclization reaction. CapC is most likely involved in the side-chain carboxyl group activation of aspartic acid at position 9 generating the electrophile for the condensation reaction. CapD may export capistruin outside of the producing cells.

The protein localises to the secreted. Its function is as follows. Peptide antibiotic that functions through inhibition of the bacterial DNA-dependent RNA polymerase (RNAP). Inhibits transcription by binding in RNAP secondary channel, where it sterically blocks the folding of the trigger loop, which is essential for efficient catalysis. In contrast to MccJ25, does not restrict access of nucleotide substrates to the catalytic center and shows a non-competitive mode of inhibition. Shows activity against closely related Gram-negative Burkholderia and Pseudomonas strains. Is not active against Gram-positive bacteria. The chain is Capistruin from Burkholderia thailandensis (strain ATCC 700388 / DSM 13276 / CCUG 48851 / CIP 106301 / E264).